We begin with the raw amino-acid sequence, 233 residues long: Large ribosomal subunit protein uL1 (233 aa).

Belongs to the universal ribosomal protein uL1 family. In terms of assembly, part of the 50S ribosomal subunit.

Binds directly to 23S rRNA. The L1 stalk is quite mobile in the ribosome, and is involved in E site tRNA release. Functionally, protein L1 is also a translational repressor protein, it controls the translation of the L11 operon by binding to its mRNA. This Laribacter hongkongensis (strain HLHK9) protein is Large ribosomal subunit protein uL1.